Here is a 318-residue protein sequence, read N- to C-terminus: MPKRGKKGAVAEDGDELKTEPEAKKSKTTAKKNDKEAAGEGPALYEDPPDQKTSPSGKPATLKICSWNVDGLRAWIKKKGLDWVKEEAPDILCLQETKCSENKLPAELQELPGLSHQYWSAPSDKEGYSGVGLLSRQCPLKVSYGIGEEEHDQEGRVIVAEFDSFVLVTAYVPNAGRGLVRLEYRQRWDEAFRRFLKGLASRKPLVLCGDLNVAHEEIDLRNPKGNKKNAGFTPQERQGFGELLQAVPLADSFRHLYPNTPYAYTFWTYMMNARSKNVGWRLDYFLLSHSLLTALCDSKIRSKALGSDHCPITLYLAL.

The segment at 1 to 33 is necessary for interaction with YBX1, binding to RNA, association together with NPM1 to rRNA, endoribonuclease activity on abasic RNA and localization in the nucleoli; the sequence is MPKRGKKGAVAEDGDELKTEPEAKKSKTTAKKN. Residues 1–60 form a disordered region; that stretch reads MPKRGKKGAVAEDGDELKTEPEAKKSKTTAKKNDKEAAGEGPALYEDPPDQKTSPSGKPA. 2 positions are modified to N6-acetyllysine; by EP300: K6 and K7. A Nuclear localization signal (NLS) motif is present at residues 8 to 13; the sequence is GAVAED. Positions 16-38 are enriched in basic and acidic residues; the sequence is ELKTEPEAKKSKTTAKKNDKEAA. Residues 23-33 are necessary for interaction with NPM1 and for efficient rRNA binding; that stretch reads AKKSKTTAKKN. K27, K31, K32, and K35 each carry N6-acetyllysine. Position 54 is a phosphoserine (S54). The Nuclear export signal (NES) motif lies at 64-80; the sequence is ICSWNVDGLRAWIKKKG. Residue C65 is modified to S-nitrosocysteine; alternate. A disulfide bond links C65 and C93. Residue D70 coordinates Mg(2+). Position 93 is an S-nitrosocysteine; alternate (C93). Position 96 (E96) interacts with Mg(2+). Residue Y171 is part of the active site. K197 carries the post-translational modification N6-acetyllysine. D210 and N212 together coordinate Mg(2+). D210 acts as the Proton donor/acceptor in catalysis. T233 carries the phosphothreonine; by CDK5 modification. The interval 289–318 is mitochondrial targeting sequence (MTS); it reads HSLLTALCDSKIRSKALGSDHCPITLYLAL. D308 provides a ligand contact to Mg(2+). C310 bears the S-nitrosocysteine mark.

Belongs to the DNA repair enzymes AP/ExoA family. As to quaternary structure, monomer. Homodimer; disulfide-linked. Component of the SET complex, composed of at least APEX1, SET, ANP32A, HMGB2, NME1 and TREX1. Associates with the dimer XRCC5/XRCC6 in a DNA-dependent manner. Interacts with SIRT1; the interaction is increased in the context of genotoxic stress. Interacts with HDAC1, HDAC2 and HDAC3; the interactions are not dependent on the APEX1 acetylation status. Interacts with XRCC1; the interaction is induced by SIRT1 and increased with the APEX1 acetylated form. Interacts with NPM1 (via N-terminal domain); the interaction is RNA-dependent and decreases in hydrogen peroxide-damaged cells. Interacts (via N-terminus) with YBX1 (via C-terminus); the interaction is increased in presence of APEX1 acetylated at Lys-6 and Lys-7. Interacts with HNRNPL; the interaction is DNA-dependent. Interacts (via N-terminus) with KPNA1 and KPNA2. Interacts with TXN; the interaction stimulates the FOS/JUN AP-1 complex DNA-binding activity in a redox-dependent manner. Interacts with GZMA, KRT8, MDM2, POLB, PRDX6, PRPF19, RPLP0, TOMM20 and WDR77. Binds to CDK5. Mg(2+) is required as a cofactor. Requires Mn(2+) as cofactor. Post-translationally, phosphorylated. Phosphorylation by kinase PKC or casein kinase CK2 results in enhanced redox activity that stimulates binding of the FOS/JUN AP-1 complex to its cognate binding site. AP-endodeoxyribonuclease activity is not affected by CK2-mediated phosphorylation. Phosphorylation of Thr-233 by CDK5 in response to MPP(+)/MPTP (1-methyl-4-phenylpyridinium) reduces AP-endodeoxyribonuclease activity resulting in accumulation of DNA damage and contributing to neuronal death. Acetylated on Lys-6 and Lys-7. Acetylation is increased by the transcriptional coactivator EP300 acetyltransferase, genotoxic agents like H(2)O(2) and methyl methanesulfonate (MMS). Acetylation increases its binding affinity to the negative calcium response element (nCaRE) DNA promoter. The acetylated form induces a stronger binding of YBX1 to the Y-box sequence in the MDR1 promoter than the unacetylated form. Deacetylated on lysines. Lys-6 and Lys-7 are deacetylated by SIRT1. In terms of processing, cleaved at Lys-31 by granzyme A to create the mitochondrial form; leading in reduction of binding to DNA, AP endodeoxyribonuclease activity, redox activation of transcription factors and to enhanced cell death. Cleaved by granzyme K; leading to intracellular ROS accumulation and enhanced cell death after oxidative stress. Post-translationally, cys-69 and Cys-93 are nitrosylated in response to nitric oxide (NO) and lead to the exposure of the nuclear export signal (NES). Ubiquitinated by MDM2; leading to translocation to the cytoplasm and proteasomal degradation.

The protein resides in the nucleus. It localises to the nucleolus. It is found in the nucleus speckle. Its subcellular location is the endoplasmic reticulum. The protein localises to the cytoplasm. The protein resides in the mitochondrion. It carries out the reaction a deoxyribonucleotide-2'-deoxyribose-5'-monophosphate-DNA + H2O = a 5'-end 2'-deoxyribose-5'-monophosphate-DNA + a 3'-end 2'-deoxyribonucleotide-DNA + H(+). The catalysed reaction is Exonucleolytic cleavage in the 3'- to 5'-direction to yield nucleoside 5'-phosphates.. It catalyses the reaction a 3'-end 2'-deoxyribonucleotide-3'-phosphoglycolate-DNA + H2O = 2-phosphoglycolate + a 3'-end 2'-deoxyribonucleotide-DNA + H(+). The enzyme catalyses a 3'-end 2'-deoxyribonucleotide-8-oxoguanine-DNA + H2O = 8-oxo-dGMP + a 3'-end 2'-deoxyribonucleotide-DNA + H(+). NPM1 stimulates endodeoxyribonuclease activity on double-stranded DNA with AP sites, but inhibits endoribonuclease activity on single-stranded RNA containing AP sites. Multifunctional protein that plays a central role in the cellular response to oxidative stress. The two major activities of APEX1 are DNA repair and redox regulation of transcriptional factors. Functions as an apurinic/apyrimidinic (AP) endodeoxyribonuclease in the base excision repair (BER) pathway of DNA lesions induced by oxidative and alkylating agents. Initiates repair of AP sites in DNA by catalyzing hydrolytic incision of the phosphodiester backbone immediately adjacent to the damage, generating a single-strand break with 5'-deoxyribose phosphate and 3'-hydroxyl ends. Also incises at AP sites in the DNA strand of DNA/RNA hybrids, single-stranded DNA regions of R-loop structures, and single-stranded RNA molecules. Operates at switch sites of immunoglobulin (Ig) constant regions where it mediates Ig isotype class switch recombination. Processes AP sites induced by successive action of AICDA and UNG. Generates staggered nicks in opposite DNA strands resulting in the formation of double-strand DNA breaks that are finally resolved via non-homologous end joining repair pathway. Has 3'-5' exodeoxyribonuclease activity on mismatched deoxyribonucleotides at the 3' termini of nicked or gapped DNA molecules during short-patch BER. Possesses DNA 3' phosphodiesterase activity capable of removing lesions (such as phosphoglycolate and 8-oxoguanine) blocking the 3' side of DNA strand breaks. Also acts as an endoribonuclease involved in the control of single-stranded RNA metabolism. Plays a role in regulating MYC mRNA turnover by preferentially cleaving in between UA and CA dinucleotides of the MYC coding region determinant (CRD). In association with NMD1, plays a role in the rRNA quality control process during cell cycle progression. Acts as a loading factor for POLB onto non-incised AP sites in DNA and stimulates the 5'-terminal deoxyribose 5'-phosphate (dRp) excision activity of POLB. Exerts reversible nuclear redox activity to regulate DNA binding affinity and transcriptional activity of transcriptional factors by controlling the redox status of their DNA-binding domain, such as the FOS/JUN AP-1 complex after exposure to IR. Involved in calcium-dependent down-regulation of parathyroid hormone (PTH) expression by binding to negative calcium response elements (nCaREs). Together with HNRNPL or the dimer XRCC5/XRCC6, associates with nCaRE, acting as an activator of transcriptional repression. May also play a role in the epigenetic regulation of gene expression by participating in DNA demethylation. Stimulates the YBX1-mediated MDR1 promoter activity, when acetylated at Lys-6 and Lys-7, leading to drug resistance. Plays a role in protection from granzyme-mediated cellular repair leading to cell death. Binds DNA and RNA. Associates, together with YBX1, on the MDR1 promoter. Together with NPM1, associates with rRNA. In Pongo pygmaeus (Bornean orangutan), this protein is DNA repair nuclease/redox regulator APEX1 (APEX1).